Reading from the N-terminus, the 517-residue chain is Crotonobetaine/carnitine--CoA ligase (517 aa).

Belongs to the ATP-dependent AMP-binding enzyme family.

The catalysed reaction is 4-(trimethylamino)butanoate + ATP + CoA = 4-(trimethylamino)butanoyl-CoA + AMP + diphosphate. It carries out the reaction crotonobetaine + ATP + CoA = crotonobetainyl-CoA + AMP + diphosphate. It catalyses the reaction (R)-carnitine + ATP + CoA = (R)-carnitinyl-CoA + AMP + diphosphate. It participates in amine and polyamine metabolism; carnitine metabolism. Functionally, catalyzes the transfer of CoA to carnitine, generating the initial carnitinyl-CoA needed for the CaiB reaction cycle. Also has activity toward crotonobetaine and gamma-butyrobetaine. This Salmonella typhi protein is Crotonobetaine/carnitine--CoA ligase.